The sequence spans 109 residues: Stress-response A/B barrel domain-containing protein HS1 (109 aa).

One can recognise a Stress-response A/B barrel domain in the interval 8 to 102; sequence VKHVLLASFK…SLDKVLVIDY (95 aa). Mg(2+) is bound by residues Val36, Ile39, Glu40, and Met42.

As to quaternary structure, homodimer. It depends on Mg(2+) as a cofactor.

Its function is as follows. Heat stable protein involved in defense against fungal pathogens. Possesses antifungal activity against diverse pathogenic fungi. Possesses antimicrobial activity. Possesses ribonuclease activity. This is Stress-response A/B barrel domain-containing protein HS1 from Arabidopsis thaliana (Mouse-ear cress).